A 317-amino-acid polypeptide reads, in one-letter code: Large ribosomal subunit protein uL10 (317 aa).

Tyr-24 is subject to Phosphotyrosine. Thr-59 is subject to Phosphothreonine. Residue Lys-264 forms a Glycyl lysine isopeptide (Lys-Gly) (interchain with G-Cter in ubiquitin) linkage. The disordered stretch occupies residues 294-317 (APAKVEAKEESEESDEDMGFGLFD). Residue Lys-297 forms a Glycyl lysine isopeptide (Lys-Gly) (interchain with G-Cter in SUMO1); alternate linkage. Residue Lys-297 forms a Glycyl lysine isopeptide (Lys-Gly) (interchain with G-Cter in SUMO2); alternate linkage. Positions 302–311 (EESEESDEDM) are enriched in acidic residues. 2 positions are modified to phosphoserine: Ser-304 and Ser-307.

This sequence belongs to the universal ribosomal protein uL10 family. P0 forms a pentameric complex by interaction with dimers of P1 and P2. Identified in a IGF2BP1-dependent mRNP granule complex containing untranslated mRNAs. Interacts with APEX1. Interacts with FMR1 isoform 6. Ubiquitinated at Lys-264 by RNF14 and RNF25 in response to ribosome collisions (ribosome stalling).

It is found in the nucleus. The protein resides in the cytoplasm. Ribosomal protein P0 is the functional equivalent of E.coli protein L10. This is Large ribosomal subunit protein uL10 (RPLP0) from Homo sapiens (Human).